The chain runs to 503 residues: MEFSVKSGSPEKQRSACIVVGVFEPRRLSPIAEQLDKISDGYISALLRRGELEGKPGQTLLLHHVPNVLSERILLIGCGKERELDERQYKQVIQKTINTLNDTGSMEAVCFLTELHVKGRNNYWKVRQAVETAKETLYSFDQLKTNKSEPRRPLRKMVFNVPTRRELTSGERAIQHGLAIAAGIKAAKDLGNMPPNICNAAYLASQARQLADSYSKNVITRVIGEQQMKELGMHSYLAVGQGSQNESLMSVIEYKGNASEDARPIVLVGKGLTFDSGGISIKPSEGMDEMKYDMCGAAAVYGVMRMVAELQLPINVIGVLAGCENMPGGRAYRPGDVLTTMSGQTVEVLNTDAEGRLVLCDVLTYVERFEPEAVIDVATLTGACVIALGHHITGLMANHNPLAHELIAASEQSGDRAWRLPLGDEYQEQLESNFADMANIGGRPGGAITAGCFLSRFTRKYNWAHLDIAGTAWRSGKAKGATGRPVALLAQFLLNRAGFNGEE.

Residues lysine 270 and aspartate 275 each coordinate Mn(2+). The active site involves lysine 282. Positions 293, 352, and 354 each coordinate Mn(2+). Arginine 356 is an active-site residue.

Belongs to the peptidase M17 family. Mn(2+) serves as cofactor.

The protein resides in the cytoplasm. The catalysed reaction is Release of an N-terminal amino acid, Xaa-|-Yaa-, in which Xaa is preferably Leu, but may be other amino acids including Pro although not Arg or Lys, and Yaa may be Pro. Amino acid amides and methyl esters are also readily hydrolyzed, but rates on arylamides are exceedingly low.. It catalyses the reaction Release of an N-terminal amino acid, preferentially leucine, but not glutamic or aspartic acids.. Presumably involved in the processing and regular turnover of intracellular proteins. Catalyzes the removal of unsubstituted N-terminal amino acids from various peptides. The polypeptide is Probable cytosol aminopeptidase (Escherichia coli O139:H28 (strain E24377A / ETEC)).